The chain runs to 225 residues: Ethylene-responsive transcription factor 3 (225 aa).

Positions 1 to 12 (MRRGRAAAAPAP) are enriched in low complexity. Disordered regions lie at residues 1–29 (MRRG…IRFR) and 82–193 (NFPL…NIAS). The segment at residues 27–84 (RFRGVRKRPWGRFAAEIRDPWKKTRVWLGTFDSAEDAARAYDAAARALRGPKAKTNFP) is a DNA-binding region (AP2/ERF). Residues 118 to 134 (SQRPTSSSMSSTVESFS) are compositionally biased toward low complexity. Basic and acidic residues predominate over residues 176–185 (DHGDCEKEND). Residues 202–208 (FDLNLPP) carry the EAR-like (transcriptional repression) motif.

Belongs to the ethylene-response factor family. Class 2 subfamily.

The protein resides in the nucleus. Transcription factor that binds to the GCC-box pathogenesis-related promoter element. Involved in the regulation of gene expression by stress factors and by components of stress signal transduction pathways. Probably acts as a transcriptional repressor and may regulate other AtERFs. The chain is Ethylene-responsive transcription factor 3 (ERF3) from Nicotiana tabacum (Common tobacco).